The primary structure comprises 644 residues: Cyclin-dependent kinase C-2 C (644 aa).

Residues 105-389 (FQKLEKIGQG…ASSALNSEYF (285 aa)) enclose the Protein kinase domain. ATP-binding positions include 111–119 (IGQGTYSSV) and lysine 134. Phosphotyrosine is present on tyrosine 116. Catalysis depends on aspartate 229, which acts as the Proton acceptor. Threonine 263 is subject to Phosphothreonine. Positions 420 to 427 (RKRANLKL) match the Nuclear localization signal motif. The span at 565–576 (SKLSRIGERHGS) shows a compositional bias: basic and acidic residues. Residues 565 to 591 (SKLSRIGERHGSLDGSGLDFSQREEDS) form a disordered region.

This sequence belongs to the protein kinase superfamily. CMGC Ser/Thr protein kinase family. CDC2/CDKX subfamily. Post-translationally, autophosphorylated. Expressed specifically in flowers and pollen.

It is found in the nucleus. The polypeptide is Cyclin-dependent kinase C-2 C (Arabidopsis thaliana (Mouse-ear cress)).